The chain runs to 364 residues: Membrane-bound lytic murein transglycosylase C (364 aa).

The first 19 residues, 1 to 19 (MNKYKKFLPLLVLIPFLAS), serve as a signal peptide directing secretion. Cys-20 carries N-palmitoyl cysteine lipidation. The S-diacylglycerol cysteine moiety is linked to residue Cys-20.

It belongs to the transglycosylase Slt family.

Its subcellular location is the cell outer membrane. The enzyme catalyses Exolytic cleavage of the (1-&gt;4)-beta-glycosidic linkage between N-acetylmuramic acid (MurNAc) and N-acetylglucosamine (GlcNAc) residues in peptidoglycan, from either the reducing or the non-reducing ends of the peptidoglycan chains, with concomitant formation of a 1,6-anhydrobond in the MurNAc residue.. In terms of biological role, murein-degrading enzyme. May play a role in recycling of muropeptides during cell elongation and/or cell division. The sequence is that of Membrane-bound lytic murein transglycosylase C from Glaesserella parasuis serovar 5 (strain SH0165) (Haemophilus parasuis).